The chain runs to 781 residues: Molybdenum cofactor sulfurase (781 aa).

Lys246 carries the post-translational modification N6-(pyridoxal phosphate)lysine. The active site involves Cys413. In terms of domain architecture, MOSC spans 635 to 781 (LRLLRQSGQR…MTCGDVVLVE (147 aa)). A Phosphoserine modification is found at Ser734.

The protein belongs to the class-V pyridoxal-phosphate-dependent aminotransferase family. MOCOS subfamily. Pyridoxal 5'-phosphate serves as cofactor.

It carries out the reaction Mo-molybdopterin + L-cysteine + AH2 = thio-Mo-molybdopterin + L-alanine + A + H2O. It participates in cofactor biosynthesis; molybdopterin biosynthesis. Functionally, sulfurates the molybdenum cofactor. Sulfation of molybdenum is essential for xanthine dehydrogenase (XDH) and aldehyde oxidase (ADO) enzymes in which molybdenum cofactor is liganded by 1 oxygen and 1 sulfur atom in active form. This is Molybdenum cofactor sulfurase from Drosophila melanogaster (Fruit fly).